The sequence spans 35 residues: Photosystem II reaction center protein T (35 aa).

A helical membrane pass occupies residues 3–23 (SVAYILILTLAIGVLFFAIAF).

Belongs to the PsbT family. In terms of assembly, PSII is composed of 1 copy each of membrane proteins PsbA, PsbB, PsbC, PsbD, PsbE, PsbF, PsbH, PsbI, PsbJ, PsbK, PsbL, PsbM, PsbT, PsbX, PsbY, PsbZ, Psb30/Ycf12, peripheral proteins PsbO, CyanoQ (PsbQ), PsbU, PsbV and a large number of cofactors. It forms dimeric complexes.

Its subcellular location is the cellular thylakoid membrane. Functionally, found at the monomer-monomer interface of the photosystem II (PS II) dimer, plays a role in assembly and dimerization of PSII. PSII is a light-driven water plastoquinone oxidoreductase, using light energy to abstract electrons from H(2)O, generating a proton gradient subsequently used for ATP formation. The chain is Photosystem II reaction center protein T from Nostoc sp. (strain PCC 7120 / SAG 25.82 / UTEX 2576).